The following is a 595-amino-acid chain: Indole-3-acetic acid-amido synthetase GH3.15 (595 aa).

ATP contacts are provided by residues 97–98, threonine 302, and 325–330; these read SS and FYGSSE. Substrate contacts are provided by phenylalanine 325 and phenylalanine 332. The ATP site is built by tyrosine 348 and aspartate 408.

This sequence belongs to the IAA-amido conjugating enzyme family. Expressed in seedlings, roots, and parts of the siliques.

It carries out the reaction (indol-3-yl)butanoate + L-cysteine + ATP = (indol-3-yl)butanoyl-L-cysteine + AMP + diphosphate + H(+). It catalyses the reaction (indol-3-yl)butanoate + L-glutamine + ATP = (indol-3-yl)butanoyl-L-glutamine + AMP + diphosphate + H(+). The enzyme catalyses 4-(2,4-dichlorophenoxy)butanoate + L-glutamine + ATP = 4-(2,4-dichlorophenoxy)butanoyl-L-glutamine + AMP + diphosphate + H(+). In terms of biological role, indole-3-acetic acid-amido (IAA) synthetase that catalyzes the conjugation of amino acids to auxin specifically using the auxin precursor indole-3-butyric acid (IBA) and glutamine and, possibly, cysteine as substrates. Displays high catalytic activity with the auxinic phenoxyalkanoic acid herbicides 4-(2,4-dichlorophenoxy)butyric acid (2,4-DB) and to some extent 2,4-dichlorophenoxylacetic acid (2,4-D) as substrates, thus conferring resistance to herbicides. This chain is Indole-3-acetic acid-amido synthetase GH3.15, found in Arabidopsis thaliana (Mouse-ear cress).